Consider the following 278-residue polypeptide: Undecaprenyl-diphosphatase (278 aa).

Transmembrane regions (helical) follow at residues 3–23 (YILI…IPIS), 42–62 (VAYS…IIYF), 88–108 (FLVI…LFVI), 112–132 (ILGL…IIIY), 152–172 (IIIV…RSGI), 190–210 (LSFI…VLFS), 225–245 (GLLI…NALL), and 253–273 (VVVL…LSGI).

This sequence belongs to the UppP family.

It is found in the cell membrane. It carries out the reaction di-trans,octa-cis-undecaprenyl diphosphate + H2O = di-trans,octa-cis-undecaprenyl phosphate + phosphate + H(+). In terms of biological role, catalyzes the dephosphorylation of undecaprenyl diphosphate (UPP). This Saccharolobus islandicus (strain M.16.4 / Kamchatka #3) (Sulfolobus islandicus) protein is Undecaprenyl-diphosphatase.